A 250-amino-acid polypeptide reads, in one-letter code: Non-specific acid phosphatase (250 aa).

The N-terminal stretch at 1 to 20 (MKSRYLLFFLPLIVAKYTSA) is a signal peptide.

Belongs to the class A bacterial acid phosphatase family. In terms of assembly, homodimer.

Its subcellular location is the periplasm. The enzyme catalyses a phosphate monoester + H2O = an alcohol + phosphate. The protein is Non-specific acid phosphatase (phoN) of Salmonella typhi.